A 422-amino-acid polypeptide reads, in one-letter code: UPF0761 membrane protein XAC0937 (422 aa).

A run of 6 helical transmembrane segments spans residues 45–65 (VFAL…FPAF), 102–122 (FTVA…HSIE), 151–171 (GTML…LPLF), 179–199 (LAEF…IVLI), 213–233 (ALPG…GFGF), and 247–267 (ALSA…SVLL).

It belongs to the UPF0761 family.

The protein resides in the cell inner membrane. The protein is UPF0761 membrane protein XAC0937 of Xanthomonas axonopodis pv. citri (strain 306).